The following is a 366-amino-acid chain: Protein FAM110B (366 aa).

Disordered regions lie at residues 127–152 (SSEG…DTTD), 163–182 (KVYP…HVSR), and 216–252 (CSSS…RPSL). Phosphoserine occurs at positions 234 and 297. The interval 313–333 (DCEQSQDSNSDLRNDDSANDR) is disordered. Positions 322-331 (SDLRNDDSAN) are enriched in basic and acidic residues.

The protein belongs to the FAM110 family.

Its subcellular location is the cytoplasm. It is found in the cytoskeleton. The protein resides in the microtubule organizing center. It localises to the centrosome. The protein is Protein FAM110B (Fam110b) of Mus musculus (Mouse).